The chain runs to 187 residues: Inner membrane-spanning protein YciB (187 aa).

5 consecutive transmembrane segments (helical) span residues 22 to 42 (IYVA…VTYA), 50 to 70 (MQLI…FFHD), 80 to 100 (IIYV…KSVV), 118 to 138 (INWA…YIAY), and 148 to 168 (FKVF…GVYI).

It belongs to the YciB family.

The protein localises to the cell inner membrane. Its function is as follows. Plays a role in cell envelope biogenesis, maintenance of cell envelope integrity and membrane homeostasis. The protein is Inner membrane-spanning protein YciB of Vibrio parahaemolyticus serotype O3:K6 (strain RIMD 2210633).